We begin with the raw amino-acid sequence, 242 residues long: Probable L-ribulose-5-phosphate 4-epimerase UlaF (242 aa).

Residues 31–32 (GN), 48–49 (SG), and 78–79 (SS) contribute to the substrate site. Zn(2+) is bound by residues Asp80, His99, and His101. Asp124 functions as the Proton donor/acceptor in the catalytic mechanism. Residue His175 participates in Zn(2+) binding. The active-site Proton donor/acceptor is Tyr234.

The protein belongs to the aldolase class II family. AraD/FucA subfamily. It depends on Zn(2+) as a cofactor.

The enzyme catalyses L-ribulose 5-phosphate = D-xylulose 5-phosphate. Its pathway is cofactor degradation; L-ascorbate degradation; D-xylulose 5-phosphate from L-ascorbate: step 4/4. In terms of biological role, catalyzes the isomerization of L-ribulose 5-phosphate to D-xylulose 5-phosphate. Is involved in the anaerobic L-ascorbate utilization. This is Probable L-ribulose-5-phosphate 4-epimerase UlaF from Mycoplasma pneumoniae (strain ATCC 29342 / M129 / Subtype 1) (Mycoplasmoides pneumoniae).